Consider the following 310-residue polypeptide: tRNA dimethylallyltransferase (310 aa).

10–17 (GPTAVGKS) is an ATP binding site. Position 12-17 (12-17 (TAVGKS)) interacts with substrate. The interaction with substrate tRNA stretch occupies residues 35–38 (DSMQ).

The protein belongs to the IPP transferase family. As to quaternary structure, monomer. Requires Mg(2+) as cofactor.

The enzyme catalyses adenosine(37) in tRNA + dimethylallyl diphosphate = N(6)-dimethylallyladenosine(37) in tRNA + diphosphate. Functionally, catalyzes the transfer of a dimethylallyl group onto the adenine at position 37 in tRNAs that read codons beginning with uridine, leading to the formation of N6-(dimethylallyl)adenosine (i(6)A). The protein is tRNA dimethylallyltransferase of Clostridium perfringens (strain SM101 / Type A).